We begin with the raw amino-acid sequence, 861 residues long: Methyltransferase/ribosomally synthesized type III borosin cyclic peptide precursor aboMAa (861 aa).

A methyltransferase domain region spans residues 1 to 279 (MSSPAVETKV…AISTFYLPPK (279 aa)). Catalysis depends on residues arginine 100, tyrosine 104, and tyrosine 126. Tyrosine 126, histidine 128, valine 131, alanine 158, glutamine 200, alanine 241, serine 272, and threonine 273 together coordinate S-adenosyl-L-methionine. The segment at 280-408 (ALSPLHEESA…GLVRSVMKTS (129 aa)) is clasp domain. The type III-specific C-terminal domain stretch occupies residues 409 to 799 (PEDVAKQFVQ…PPDLEELPIP (391 aa)). 2 disordered regions span residues 575–596 (NGAF…SSQG) and 772–801 (EAAE…IPDA). Residues 579–593 (PSGGGGGSGGGGGSS) show a composition bias toward gly residues. The segment covering 772 to 783 (EAAEKDSAVDDE) has biased composition (basic and acidic residues). The segment covering 784-797 (KFADEEPPDLEELP) has biased composition (acidic residues). Valine 805 and valine 807 each carry N-methylvaline. 9 tandem repeats follow at residues 805–809 (VDVTD), 810–814 (VDVTD), 815–819 (VDVTD), 820–824 (VDVTD), 825–829 (VDVTD), 830–834 (VDVTD), 835–839 (VDVTD), 840–844 (VDVTD), and 845–849 (VDVTD). The 10 X 5 AA tandem repeats of VDVTD stretch occupies residues 805–854 (VDVTDVDVTDVDVTDVDVTDVDVTDVDVTDVDVTDVDVTDVDVTDVDVVD). Residue threonine 808 is modified to N-methylthreonine. 2 positions are modified to N-methylvaline: valine 810 and valine 812. At threonine 813 the chain carries N-methylthreonine. Residues valine 815 and valine 817 each carry the N-methylvaline modification. Threonine 818 bears the N-methylthreonine mark. N-methylvaline occurs at positions 820 and 822. Threonine 823 carries the post-translational modification N-methylthreonine. 2 positions are modified to N-methylvaline: valine 825 and valine 827. Position 828 is an N-methylthreonine (threonine 828). N-methylvaline occurs at positions 830 and 832. Threonine 833 is subject to N-methylthreonine. One copy of the 10; approximate repeat lies at 850 to 854 (VDVVD).

In the N-terminal section; belongs to the precorrin methyltransferase family. AboMA automethylates at Val-805, Val-807, Thr-808, Val-810, Val-812, Thr-813, Val-815, Val-817, Thr-818, Val-820, Val-822, Thr-823, Val-825, Val-827 and Thr-828, Val-830, Val-832 and T-833 before being processed by a prolyloligopeptidase which likely forms a peptidyl ester upon removal of the follower propeptide, which then undergoes macrocyclization with the N-terminus of the modified core peptide. Peptide backbone alpha-N-methylations change the physicochemical properties of amide bonds to provide structural constraints and other favorable characteristics including biological membrane permeability to peptides.

Its pathway is secondary metabolite biosynthesis. Its function is as follows. Fusion protein of the methyltransferase aboM and a type III borosin core peptide; part of the gene cluster that mediates the biosynthesis of a type III borosin, a highly methylated cyclic peptide with potent biological activities. Type III borosins derive from the C-terminus of the fusion protein, and it is the same protein that methylates its own C-terminus using S-adenosyl methionine (SAM). The C-terminus is subsequently cleaved off and macrocyclized by a prolyloligopeptidase to give the final product. The protein is Methyltransferase/ribosomally synthesized type III borosin cyclic peptide precursor aboMAa of Anomoporia bombycina (Polyporus bombycinus).